Reading from the N-terminus, the 204-residue chain is Octanoyltransferase (204 aa).

The BPL/LPL catalytic domain occupies 27-202; the sequence is QGGEEALLLL…RFQPFLHLHL (176 aa). Substrate-binding positions include 65 to 72, 132 to 134, and 145 to 147; these read RGGDVTYH, SIG, and GFA. Cys163 serves as the catalytic Acyl-thioester intermediate.

This sequence belongs to the LipB family.

It is found in the cytoplasm. The enzyme catalyses octanoyl-[ACP] + L-lysyl-[protein] = N(6)-octanoyl-L-lysyl-[protein] + holo-[ACP] + H(+). It functions in the pathway protein modification; protein lipoylation via endogenous pathway; protein N(6)-(lipoyl)lysine from octanoyl-[acyl-carrier-protein]: step 1/2. Its function is as follows. Catalyzes the transfer of endogenously produced octanoic acid from octanoyl-acyl-carrier-protein onto the lipoyl domains of lipoate-dependent enzymes. Lipoyl-ACP can also act as a substrate although octanoyl-ACP is likely to be the physiological substrate. This Geobacter sp. (strain M21) protein is Octanoyltransferase.